Reading from the N-terminus, the 289-residue chain is ADP-dependent (S)-NAD(P)H-hydrate dehydratase (289 aa).

Residues 9 to 286 form the YjeF C-terminal domain; that stretch reads VTAAALRAQP…PEVPGILDRL (278 aa). (6S)-NADPHX is bound by residues Ala-44 and His-160. AMP is bound by residues 197–201 and Gly-226; that span reads KGADS. Residue Asp-227 coordinates (6S)-NADPHX.

Belongs to the NnrD/CARKD family. In terms of assembly, homotetramer. It depends on Mg(2+) as a cofactor.

It carries out the reaction (6S)-NADHX + ADP = AMP + phosphate + NADH + H(+). The enzyme catalyses (6S)-NADPHX + ADP = AMP + phosphate + NADPH + H(+). Its function is as follows. Catalyzes the dehydration of the S-form of NAD(P)HX at the expense of ADP, which is converted to AMP. Together with NAD(P)HX epimerase, which catalyzes the epimerization of the S- and R-forms, the enzyme allows the repair of both epimers of NAD(P)HX, a damaged form of NAD(P)H that is a result of enzymatic or heat-dependent hydration. This chain is ADP-dependent (S)-NAD(P)H-hydrate dehydratase, found in Xanthomonas campestris pv. campestris (strain ATCC 33913 / DSM 3586 / NCPPB 528 / LMG 568 / P 25).